Here is a 130-residue protein sequence, read N- to C-terminus: Fluoride-specific ion channel FluC (130 aa).

Helical transmembrane passes span 4-24, 35-55, 68-88, and 99-119; these read MINV…RYFI, GFPI…GLLT, LNLF…TFSL, and AVFG…GVVL. 2 residues coordinate Na(+): G78 and T81.

The protein belongs to the fluoride channel Fluc/FEX (TC 1.A.43) family.

It is found in the cell membrane. The catalysed reaction is fluoride(in) = fluoride(out). With respect to regulation, na(+) is not transported, but it plays an essential structural role and its presence is essential for fluoride channel function. In terms of biological role, fluoride-specific ion channel. Important for reducing fluoride concentration in the cell, thus reducing its toxicity. The sequence is that of Fluoride-specific ion channel FluC from Ruminiclostridium cellulolyticum (strain ATCC 35319 / DSM 5812 / JCM 6584 / H10) (Clostridium cellulolyticum).